Reading from the N-terminus, the 121-residue chain is Ribosome-binding factor A (121 aa).

It belongs to the RbfA family. In terms of assembly, monomer. Binds 30S ribosomal subunits, but not 50S ribosomal subunits or 70S ribosomes.

The protein localises to the cytoplasm. Its function is as follows. One of several proteins that assist in the late maturation steps of the functional core of the 30S ribosomal subunit. Associates with free 30S ribosomal subunits (but not with 30S subunits that are part of 70S ribosomes or polysomes). Required for efficient processing of 16S rRNA. May interact with the 5'-terminal helix region of 16S rRNA. In Heliobacterium modesticaldum (strain ATCC 51547 / Ice1), this protein is Ribosome-binding factor A.